Reading from the N-terminus, the 204-residue chain is 3-isopropylmalate dehydratase small subunit (204 aa).

It belongs to the LeuD family. LeuD type 1 subfamily. As to quaternary structure, heterodimer of LeuC and LeuD.

It catalyses the reaction (2R,3S)-3-isopropylmalate = (2S)-2-isopropylmalate. It functions in the pathway amino-acid biosynthesis; L-leucine biosynthesis; L-leucine from 3-methyl-2-oxobutanoate: step 2/4. Functionally, catalyzes the isomerization between 2-isopropylmalate and 3-isopropylmalate, via the formation of 2-isopropylmaleate. The protein is 3-isopropylmalate dehydratase small subunit of Psychromonas ingrahamii (strain DSM 17664 / CCUG 51855 / 37).